We begin with the raw amino-acid sequence, 324 residues long: Succinylglutamate desuccinylase (324 aa).

Zn(2+) contacts are provided by His-53, Glu-56, and His-148. Glu-211 is an active-site residue.

It belongs to the AspA/AstE family. Succinylglutamate desuccinylase subfamily. The cofactor is Zn(2+).

The enzyme catalyses N-succinyl-L-glutamate + H2O = L-glutamate + succinate. The protein operates within amino-acid degradation; L-arginine degradation via AST pathway; L-glutamate and succinate from L-arginine: step 5/5. In terms of biological role, transforms N(2)-succinylglutamate into succinate and glutamate. In Acinetobacter baumannii (strain AB0057), this protein is Succinylglutamate desuccinylase.